Consider the following 522-residue polypeptide: 2-isopropylmalate synthase (522 aa).

Residues 5 to 267 (VIIFDTTLRD…ETGINAKEIH (263 aa)) form the Pyruvate carboxyltransferase domain. Positions 14, 202, 204, and 238 each coordinate Mn(2+). A regulatory domain region spans residues 392–522 (QLQQLVVQSD…MQKNRELGGV (131 aa)).

The protein belongs to the alpha-IPM synthase/homocitrate synthase family. LeuA type 1 subfamily. As to quaternary structure, homodimer. It depends on Mn(2+) as a cofactor.

Its subcellular location is the cytoplasm. The enzyme catalyses 3-methyl-2-oxobutanoate + acetyl-CoA + H2O = (2S)-2-isopropylmalate + CoA + H(+). The protein operates within amino-acid biosynthesis; L-leucine biosynthesis; L-leucine from 3-methyl-2-oxobutanoate: step 1/4. Functionally, catalyzes the condensation of the acetyl group of acetyl-CoA with 3-methyl-2-oxobutanoate (2-ketoisovalerate) to form 3-carboxy-3-hydroxy-4-methylpentanoate (2-isopropylmalate). The polypeptide is 2-isopropylmalate synthase (Shewanella baltica (strain OS185)).